The chain runs to 392 residues: Caveolae-associated protein 1 (392 aa).

Met1 is modified (N-acetylmethionine). Basic and acidic residues predominate over residues 1–10 (MEDVTLHIVE). The interval 1 to 45 (MEDVTLHIVERPYSGYPDASSEGPEPTPGEARATEEPSGTGSDEL) is disordered. Residues 1 to 100 (MEDVTLHIVE…IQGELSKLGK (100 aa)) are required for homotrimerization and for interaction with CAVIN2 and CAVIN3. A phosphoserine mark is found at Ser21 and Ser38. A Phosphothreonine modification is found at Thr40. Residues Ser42 and Ser48 each carry the phosphoserine modification. The interval 54-64 (VLVLSLLDKII) is nuclear export signal. The segment at 55 to 77 (LVLSLLDKIIGAVDQIQLTQAQL) is leucine-zipper 1. Residue Lys118 forms a Glycyl lysine isopeptide (Lys-Gly) (interchain with G-Cter in SUMO2) linkage. A Phosphoserine modification is found at Ser120. A Glycyl lysine isopeptide (Lys-Gly) (interchain with G-Cter in SUMO2) cross-link involves residue Lys124. The nuclear localization signal stretch occupies residues 138–154 (KKLEVNEAELLRRRNFK). The residue at position 158 (Tyr158) is a Phosphotyrosine. Lys163 participates in a covalent cross-link: Glycyl lysine isopeptide (Lys-Gly) (interchain with G-Cter in SUMO1); alternate. Lys163 is covalently cross-linked (Glycyl lysine isopeptide (Lys-Gly) (interchain with G-Cter in SUMO2); alternate). Lys167 participates in a covalent cross-link: Glycyl lysine isopeptide (Lys-Gly) (interchain with G-Cter in SUMO2). Residues 168 to 188 (LSVSKSLKESEALPEKEGDEL) are leucine-zipper 2. Phosphoserine is present on residues Ser169 and Ser171. Lys172 participates in a covalent cross-link: Glycyl lysine isopeptide (Lys-Gly) (interchain with G-Cter in SUMO2). 2 positions are modified to phosphoserine: Ser173 and Ser177. Over residues 173-183 (SLKESEALPEK) the composition is skewed to basic and acidic residues. The disordered stretch occupies residues 173 to 198 (SLKESEALPEKEGDELGEGERPEEDA). Acidic residues predominate over residues 184 to 198 (EGDELGEGERPEEDA). Residues 201-284 (IELSSDEAVE…RMNKLGTRLV (84 aa)) are a coiled coil. A phosphoserine mark is found at Ser204 and Ser205. Positions 235–251 (KKAFSKEKMEKTKVRTR) are nuclear localization signal. Residues 259 to 299 (LKTKENLEKTRHTLEKRMNKLGTRLVPVERREKLKTSRDKL) form a leucine-zipper 3 region. Ser302 is modified (phosphoserine). Thr304 carries the phosphothreonine modification. The residue at position 310 (Tyr310) is a Phosphotyrosine. Residue Lys328 forms a Glycyl lysine isopeptide (Lys-Gly) (interchain with G-Cter in SUMO2) linkage. Residues 347–367 (GPDDDEVGAERGAETDLLRGS) form a disordered region. Over residues 354–363 (GAERGAETDL) the composition is skewed to basic and acidic residues. Phosphoserine occurs at positions 367, 368, 381, 389, and 391.

It belongs to the CAVIN family. As to quaternary structure, component of the CAVIN complex composed of CAVIN1, CAVIN2, CAVIN3 and CAVIN4. Interacts with RNA polymerase I subunit POLR1A/RPA1 and TTF1. Binds the 3' end of pre-rRNA. Interacts with transcription factor ZNF148. Interacts with LIPE in the adipocyte cytoplasm. Interacts with CAV1, CAV3, CAVIN2, CAVIN3 and CAVIN4. Phosphorylated. Present in active and inactive forms. Changes in phosphorylation pattern may alter activity. Phosphorylation at Tyr-158 is essential for its function in the regulation of ribosomal transcriptional activity. Post-translationally, monoubiquitinated. As to expression, expressed in the adipocyte (at protein level). Expressed in all striated and smooth muscles tested including diaphragm, esophageal striated muscle, fibroblast, endocardial endothelium, epicardial mesothelium, intestinal smooth muscle, masseter, soleus muscle, vascular smooth muscle and white gastrocnemius muscle (at protein level). Expressed in the endothelium and perineural sheath (at protein level). Not expressed in hepatocytes.

The protein resides in the membrane. It is found in the caveola. It localises to the cell membrane. The protein localises to the microsome. Its subcellular location is the endoplasmic reticulum. The protein resides in the cytoplasm. It is found in the cytosol. It localises to the mitochondrion. The protein localises to the nucleus. Functionally, plays an important role in caveolae formation and organization. Essential for the formation of caveolae in all tissues. Core component of the CAVIN complex which is essential for recruitment of the complex to the caveolae in presence of calveolin-1 (CAV1). Essential for normal oligomerization of CAV1. Promotes ribosomal transcriptional activity in response to metabolic challenges in the adipocytes and plays an important role in the formation of the ribosomal transcriptional loop. Dissociates transcription complexes paused by DNA-bound TTF1, thereby releasing both RNA polymerase I and pre-RNA from the template. The caveolae biogenesis pathway is required for the secretion of proteins such as GASK1A. This Rattus norvegicus (Rat) protein is Caveolae-associated protein 1.